Here is a 396-residue protein sequence, read N- to C-terminus: Tryptophan synthase beta chain (396 aa).

Lysine 96 bears the N6-(pyridoxal phosphate)lysine mark.

Belongs to the TrpB family. As to quaternary structure, tetramer of two alpha and two beta chains. It depends on pyridoxal 5'-phosphate as a cofactor.

It carries out the reaction (1S,2R)-1-C-(indol-3-yl)glycerol 3-phosphate + L-serine = D-glyceraldehyde 3-phosphate + L-tryptophan + H2O. The protein operates within amino-acid biosynthesis; L-tryptophan biosynthesis; L-tryptophan from chorismate: step 5/5. Functionally, the beta subunit is responsible for the synthesis of L-tryptophan from indole and L-serine. In Azobacteroides pseudotrichonymphae genomovar. CFP2, this protein is Tryptophan synthase beta chain.